The following is an 820-amino-acid chain: DNA gyrase subunit A (820 aa).

The Topo IIA-type catalytic domain maps to 31-496; sequence IPDVRDGLKP…TLTNIEIEDL (466 aa). The O-(5'-phospho-DNA)-tyrosine intermediate role is filled by Y119. The GyrA-box motif lies at 523–529; it reads QRRGGKG.

It belongs to the type II topoisomerase GyrA/ParC subunit family. Heterotetramer, composed of two GyrA and two GyrB chains. In the heterotetramer, GyrA contains the active site tyrosine that forms a transient covalent intermediate with DNA, while GyrB binds cofactors and catalyzes ATP hydrolysis.

Its subcellular location is the cytoplasm. It carries out the reaction ATP-dependent breakage, passage and rejoining of double-stranded DNA.. In terms of biological role, a type II topoisomerase that negatively supercoils closed circular double-stranded (ds) DNA in an ATP-dependent manner to modulate DNA topology and maintain chromosomes in an underwound state. Negative supercoiling favors strand separation, and DNA replication, transcription, recombination and repair, all of which involve strand separation. Also able to catalyze the interconversion of other topological isomers of dsDNA rings, including catenanes and knotted rings. Type II topoisomerases break and join 2 DNA strands simultaneously in an ATP-dependent manner. In Lawsonia intracellularis (strain PHE/MN1-00), this protein is DNA gyrase subunit A.